We begin with the raw amino-acid sequence, 185 residues long: Ribosome-recycling factor (185 aa).

It belongs to the RRF family.

The protein resides in the cytoplasm. Its function is as follows. Responsible for the release of ribosomes from messenger RNA at the termination of protein biosynthesis. May increase the efficiency of translation by recycling ribosomes from one round of translation to another. This chain is Ribosome-recycling factor, found in Corynebacterium jeikeium (strain K411).